Reading from the N-terminus, the 247-residue chain is MSEATTTLDGWYCLHDLRSIDWAAWKTLSSDERGQAVSEFLNVVEKWNDVAAAKKGSHAMYTVVGQKADIMLMILRPTMEELNEIETELNKTTLAEYMVPAYSYVSVVELSNYLPADEDPYQNPQILARLYPELPKANHICFYPMDKRRQGDDNWYMLPMEERKKMMYSHSKIGRQYAGKVRQVISGSVGFDDFEWGVTLFADDILQFKKLIYEMRFDEVSARYGEFGTFFVGNILPDEKVEKFLHI.

Fe-coproporphyrin III-binding positions include R129, 143 to 147 (YPMDK), H170, Q183, and S221. Y143 is a catalytic residue.

This sequence belongs to the ChdC family. Type 1 subfamily. Requires Fe-coproporphyrin III as cofactor.

It catalyses the reaction Fe-coproporphyrin III + 2 H2O2 + 2 H(+) = heme b + 2 CO2 + 4 H2O. It carries out the reaction Fe-coproporphyrin III + H2O2 + H(+) = harderoheme III + CO2 + 2 H2O. The enzyme catalyses harderoheme III + H2O2 + H(+) = heme b + CO2 + 2 H2O. It functions in the pathway porphyrin-containing compound metabolism; protoheme biosynthesis. Functionally, involved in coproporphyrin-dependent heme b biosynthesis. Catalyzes the decarboxylation of Fe-coproporphyrin III (coproheme) to heme b (protoheme IX), the last step of the pathway. The reaction occurs in a stepwise manner with a three-propionate intermediate. The protein is Coproheme decarboxylase of Bacillus cereus (strain AH820).